Here is a 452-residue protein sequence, read N- to C-terminus: GTPase Obg (452 aa).

The Obg domain occupies 1–158; that stretch reads MFIDRAKIYV…KWIVLELKVM (158 aa). Disordered regions lie at residues 66–87 and 117–143; these read GKRG…DKVI and AEGG…SEDG. Residues 159–338 enclose the OBG-type G domain; it reads AEVGLIGYPN…LLDFVAEKVA (180 aa). GTP is bound by residues 165–172, 190–194, 212–215, 282–285, and 319–321; these read GYPNVGKS, FTTLN, DIPG, NKMD, and SAA. 2 residues coordinate Mg(2+): Ser-172 and Thr-192. The OCT domain maps to 376–452; sequence IEEKPKSDFG…KIGNVEFEYQ (77 aa).

It belongs to the TRAFAC class OBG-HflX-like GTPase superfamily. OBG GTPase family. As to quaternary structure, monomer. The cofactor is Mg(2+).

It is found in the cytoplasm. An essential GTPase which binds GTP, GDP and possibly (p)ppGpp with moderate affinity, with high nucleotide exchange rates and a fairly low GTP hydrolysis rate. Plays a role in control of the cell cycle, stress response, ribosome biogenesis and in those bacteria that undergo differentiation, in morphogenesis control. This Natranaerobius thermophilus (strain ATCC BAA-1301 / DSM 18059 / JW/NM-WN-LF) protein is GTPase Obg.